Here is a 297-residue protein sequence, read N- to C-terminus: Homoserine kinase (297 aa).

Residue 85–95 (PPTRGMGSSSA) participates in ATP binding.

This sequence belongs to the GHMP kinase family. Homoserine kinase subfamily.

Its subcellular location is the cytoplasm. The catalysed reaction is L-homoserine + ATP = O-phospho-L-homoserine + ADP + H(+). It participates in amino-acid biosynthesis; L-threonine biosynthesis; L-threonine from L-aspartate: step 4/5. Its function is as follows. Catalyzes the ATP-dependent phosphorylation of L-homoserine to L-homoserine phosphate. The sequence is that of Homoserine kinase from Desulfitobacterium hafniense (strain DSM 10664 / DCB-2).